A 1563-amino-acid chain; its full sequence is GHGAVTSPQTQRGYTAFVHTKLSRVIGASGIHTGTMSFGKMEGDASDKNIGFMLQDDVADGPYYRQEWEGMKQTTPIISGGMNALRLPAFFENLGHSNVILTAGGGAFGHKDGPKQGAISCAQGEESWKLWKAGTYGDVSLSDGVVEYAKTHEELKGAFLTFQKDADQIYPGWKEKLGYTGESSVQAASFNWQKKDLAAAFVGASTTRKASSVARRALDQSSRYADLSLTEEDLIKNGQHVLVAYIMKPKAGYDYLATAAHFAAESSTGTNVNVCTTDDFTKTVDALVYYIDPENEEMKIAYPTALFDRNITDGRAMMCSVLTLSIGNNQGMGDVDYGKIYDIYFPPQYLRLFDGPSCCVIDMWRILGRGTVGGGLVVGTIIKPKLGLQPKPFGQACYGFWQGGDFIKNDEPQGNQTFCQMNECIPEVVKAMRAAQEETGQGKLFSANITADDPNEMIARAKYILNQMGPMAENCAFLVDGYVAGGTAVTVARRNFPKQFLHYHRAGHGAVTSPQTQRGYTAFVHTKLSRVIGASGIHTGTMSFGKMEGDASDKNIGFMLQDDVADGPYYRQEWEGMKQTTPIISGGMNALRLPAFFENLGHSNVILTAGGGAFGHKDGPKQGAISCAQGEESWKLWKAGTYGDVSLSDGVVEYAKTHEELKGAFLTFQKDADQIYPGWKEKLGYTGESSVQAASFNWQKKDLAAAFVGASTTRKASSVARRALDQSSRYADLSLTEEDLIKNGQHVLVAYIMKPKAGYDYLATAAHFAAESSTGTNVNVCTTDDFTKTVDALVYYIDPENEEMKIAYPTALFDRNITDGRAMMCSVLTLSIGNNQGMGDVDYGKIYDIYFPPQYLRLFDGPSCCVIDMWRILGRGTVGGGLVVGTIIKPKLGLQPKPFGQACYGFWQGGDFIKNDEPQGNQTFCQMNECIPEVVKAMRAAQEETGQGKLFSANITADDPNEMIARAKYILNQMGPMAENCAFLVDGYVAGGTAVTVARRNFPKQFLHYHRAGHGAVTSPQTQRGYTAFVHTKLSRVIGASGIHTGTMSFGKMEGDASDKNIGFMLQDDVADGPYYRQEWEGMKQTTPIISGGMNALRLPAFFENLGHSNVILTAGGGAFGHKDGPKQGAISCAQGEESWKLWKAGTYGDVSLSDGVVEYAKTHEELKGAFLTFQKDADQIYPGWKEKLGYTGESSVQAASFNWQKKDLAAAFVGASTTRKASSVARRALDQSSRYADLSLTEEDLIKNGQHVLVAYIMKPKAGYDYLATAAHFAAESSTGTNVNVCTTDDFTKTVDALVYYIDPENEEMKIAYPTALFDRNITDGRAMMCSVLTLSIGNNQGMGDVDYGKIYDIYFPPQYLRLFDGPSCCVIDMWRILGRGTVGGGLVVGTIIKPKLGLQPKPFGQACYGFWQGGDFIKNDEPQGNQTFCQMNECIPEVVKAMRAAQEETGQGKLFSANITADDPNEMIARAKYILNQMGPMAENCAFLVDGYVAGGTAVTVARRNFPKQFLHYHRAGHGAVTSPQTQRGYTAFVHTKLSRVIGASGIHTGTMSFGKMEGDA.

Positions 32 and 79 each coordinate substrate. Residues 197 to 217 (LAAAFVGASTTRKASSVARRA) constitute a propeptide, linker. Asn-328 serves as a coordination point for substrate. The Proton acceptor role is filled by Lys-383. Lys-385 serves as a coordination point for substrate. Mg(2+) is bound by residues Lys-408, Asp-410, and Glu-411. N6-carboxylysine is present on Lys-408. His-504 (proton acceptor) is an active-site residue. Substrate-binding residues include Arg-505, His-538, and Ser-585. Residues 703–723 (LAAAFVGASTTRKASSVARRA) constitute a propeptide, linker. Asn-834 lines the substrate pocket. The active-site Proton acceptor is the Lys-889. Residue Lys-891 coordinates substrate. Lys-914, Asp-916, and Glu-917 together coordinate Mg(2+). Lys-914 is modified (N6-carboxylysine). Catalysis depends on His-1010, which acts as the Proton acceptor. 3 residues coordinate substrate: Arg-1011, His-1044, and Ser-1091. The propeptide at 1209 to 1229 (LAAAFVGASTTRKASSVARRA) is linker. Residue Asn-1340 participates in substrate binding. Lys-1395 functions as the Proton acceptor in the catalytic mechanism. Substrate is bound at residue Lys-1397. The Mg(2+) site is built by Lys-1420, Asp-1422, and Glu-1423. The residue at position 1420 (Lys-1420) is an N6-carboxylysine. Catalysis depends on His-1516, which acts as the Proton acceptor. Substrate contacts are provided by Arg-1517 and His-1550.

The protein belongs to the RuBisCO large chain family. Type II subfamily. As to quaternary structure, homodimer. Mg(2+) serves as cofactor. In Western blots an approximately 220 kDa polyprotein and 2 smaller proteins of about 55 and 52 kDa are detected, suggesting the polyprotein may be cleaved at one end of the linker and then at the other end to give mature RuBisCO.

Its subcellular location is the plastid. It is found in the chloroplast. It carries out the reaction 2 (2R)-3-phosphoglycerate + 2 H(+) = D-ribulose 1,5-bisphosphate + CO2 + H2O. The enzyme catalyses D-ribulose 1,5-bisphosphate + O2 = 2-phosphoglycolate + (2R)-3-phosphoglycerate + 2 H(+). RuBisCO catalyzes two reactions: the carboxylation of D-ribulose 1,5-bisphosphate, the primary event in carbon dioxide fixation, as well as the oxidative fragmentation of the pentose substrate. Both reactions occur simultaneously and in competition at the same active site. The polypeptide is Ribulose bisphosphate carboxylase (rbcL) (Prorocentrum minimum (Dinoflagellate)).